The primary structure comprises 257 residues: Acetylglutamate kinase (257 aa).

Residues 43 to 44 (GG), Arg65, and Asn157 each bind substrate. Residues 180-185 (DISSIL) and 208-210 (IIT) contribute to the ATP site.

This sequence belongs to the acetylglutamate kinase family. ArgB subfamily. In terms of assembly, homodimer.

The protein localises to the cytoplasm. It catalyses the reaction N-acetyl-L-glutamate + ATP = N-acetyl-L-glutamyl 5-phosphate + ADP. It functions in the pathway amino-acid biosynthesis; L-arginine biosynthesis; N(2)-acetyl-L-ornithine from L-glutamate: step 2/4. Catalyzes the ATP-dependent phosphorylation of N-acetyl-L-glutamate. The protein is Acetylglutamate kinase of Buchnera aphidicola subsp. Acyrthosiphon pisum (strain Tuc7).